A 1198-amino-acid polypeptide reads, in one-letter code: Sterol 3-beta-glucosyltransferase (1198 aa).

The segment covering 1 to 11 (MPITQIISASD) has biased composition (polar residues). 2 disordered regions span residues 1–89 (MPIT…DNAD) and 124–162 (SQVD…PEVP). Residues 35-51 (RHHRLSRSLSKFKRWRG) are compositionally biased toward basic residues. Residues 52–67 (RSNSSLSMGSSEQQEL) show a composition bias toward low complexity. S76 is subject to Phosphoserine. Residues 146–162 (VKSKKENLKTKSHPEVP) are compositionally biased toward basic and acidic residues. Positions 187-236 (AKLRQRFCLDEQEPFLNDFPAWLLKDVLVQGHIFITTKHFLFFAYLPKNP) constitute a GRAM 1 domain. A PH domain is found at 238–336 (SVKMSGNLNI…WVNALKKEQF (99 aa)). A disordered region spans residues 427–465 (KSSFGKETPATAEQKNNGEDSKYLNVPTSAVPSSENGKK). A compositionally biased stretch (polar residues) spans 452–461 (VPTSAVPSSE). The GRAM 2 domain maps to 570 to 636 (ERFRYHFKFN…VDVETCYKEK (67 aa)). Residue S693 is modified to Phosphoserine. Residues S749, R750, D752, N1025, N1053, V1054, H1056, H1069, S1072, G1073, T1074, D1093, and Q1094 each coordinate UDP-alpha-D-glucose.

This sequence belongs to the glycosyltransferase 28 family.

It is found in the cytoplasm. The protein localises to the membrane. The catalysed reaction is a sterol + UDP-alpha-D-glucose = a sterol 3-beta-D-glucoside + UDP + H(+). It catalyses the reaction ergosterol + UDP-alpha-D-glucose = ergosteryl 3-beta-D-glucoside + UDP + H(+). Functionally, sterol glycosyltransferase responsible for the glycosylation of ergosterol to form ergosterol-glucoside. Also shows activity in vitro on other sterols such as cholesterol, beta-sitosterol, stigmasterol and tomatidine. In contrasts to what is observed in Pichia pastoris and Aspergillus oryzae, is not involved in cytoplasm to vacuole transport (Cvt), pexophagy or nonselective autophagy in Saccharomyces cerevisiae. This Saccharomyces cerevisiae (strain YJM789) (Baker's yeast) protein is Sterol 3-beta-glucosyltransferase.